The following is a 386-amino-acid chain: Protein DOM34 (386 aa).

It belongs to the eukaryotic release factor 1 family. Pelota subfamily. Monomer. Component of the Dom34-Hbs1 complex, also named Pelota-HBS1L complex, composed of DOM34 and HBS1. A divalent metal cation serves as cofactor.

The protein resides in the cytoplasm. Its function is as follows. Component of the Dom34-Hbs1 complex, a complex that recognizes stalled ribosomes and triggers the No-Go Decay (NGD) pathway. In the Dom34-Hbs1 complex, DOM34 recognizes ribosomes stalled at the 3' end of an mRNA and engages stalled ribosomes by destabilizing mRNA in the mRNA channel. Following ribosome-binding, the Dom34-Hbs1 complex promotes the disassembly of stalled ribosomes, followed by degradation of damaged mRNAs as part of the NGD pathway. The Dom34-Hbs1 complex is also involved in non-functional rRNA decay. In Saccharomyces cerevisiae (strain ATCC 204508 / S288c) (Baker's yeast), this protein is Protein DOM34.